We begin with the raw amino-acid sequence, 455 residues long: Growth/differentiation factor 9 (455 aa).

An N-terminal signal peptide occupies residues Met-1–Gly-24. Residues Ser-25 to Arg-320 constitute a propeptide that is removed on maturation. N-linked (GlcNAc...) asparagine glycans are attached at residues Asn-106, Asn-163, Asn-236, Asn-255, and Asn-269. Residues Glu-305–Glu-328 form a disordered region. Asn-339 carries an N-linked (GlcNAc...) asparagine glycan. Cystine bridges form between Cys-354-Cys-420, Cys-383-Cys-452, and Cys-387-Cys-454.

It belongs to the TGF-beta family. In terms of assembly, homodimer or heterodimer (Potential). But, in contrast to other members of this family, cannot be disulfide-linked. In terms of processing, phosphorylated; phosphorylation is critical for GDF9 function.

Its subcellular location is the secreted. Its function is as follows. Required for ovarian folliculogenesis. The polypeptide is Growth/differentiation factor 9 (GDF9) (Papio anubis (Olive baboon)).